A 266-amino-acid chain; its full sequence is Ribosomal RNA small subunit methyltransferase A (266 aa).

Asn16, Leu18, Gly43, Glu64, Asp89, and Asn110 together coordinate S-adenosyl-L-methionine.

The protein belongs to the class I-like SAM-binding methyltransferase superfamily. rRNA adenine N(6)-methyltransferase family. RsmA subfamily.

It localises to the cytoplasm. The enzyme catalyses adenosine(1518)/adenosine(1519) in 16S rRNA + 4 S-adenosyl-L-methionine = N(6)-dimethyladenosine(1518)/N(6)-dimethyladenosine(1519) in 16S rRNA + 4 S-adenosyl-L-homocysteine + 4 H(+). Specifically dimethylates two adjacent adenosines (A1518 and A1519) in the loop of a conserved hairpin near the 3'-end of 16S rRNA in the 30S particle. May play a critical role in biogenesis of 30S subunits. This is Ribosomal RNA small subunit methyltransferase A from Marinomonas sp. (strain MWYL1).